The sequence spans 676 residues: Intraflagellar transport protein 81 homolog (676 aa).

S2 bears the N-acetylserine mark. Residues 2–121 are CH (calponin-homology)-like region; sequence SDQIKFIMDS…LKKRAYLARF (120 aa). T61 is subject to Phosphothreonine. 4 coiled-coil regions span residues 132–258, 306–389, 416–456, and 490–622; these read LQDE…ADAK, HSDL…FDGT, QIIA…KGIS, and VKKL…REKQ.

Belongs to the IFT81 family. In terms of assembly, component of the IFT complex B, at least composed of IFT20, IFT22, IFT25, IFT27, IFT46, IFT52, TRAF3IP1/IFT54, IFT57, IFT74, IFT80, IFT81, and IFT88. Interacts with IFT74; the interaction is direct: within the IFT complex B, IFT74 and IFT81 mediate the transport of tubulin within the cilium. Interacts with tubulin; the interaction is direct. Interacts with IFT57 and IFT70B. Interacts with RABL2/RABL2A; binding is equal in the presence of GTP or GDP. Interacts with IFT88. Interacts (via the IFT74/IFT81 heterodimer) with RABL2B. Interacts with CFAP61. In terms of tissue distribution, highly expressed in testis, moderately in ovary, heart, liver, skeletal muscle, kidney and pancreas, low in prostate, brain, placenta and lung and not detected in spleen, thymus, small intestine and colon. Isoform CDV-1R is abundantly expressed in testis.

It is found in the cell projection. The protein resides in the cilium. Its subcellular location is the cytoplasm. It localises to the cytoskeleton. The protein localises to the cilium basal body. In terms of biological role, component of the intraflagellar transport (IFT) complex B: together with IFT74, forms a tubulin-binding module that specifically mediates transport of tubulin within the cilium. Binds tubulin via its CH (calponin-homology)-like region. Required for ciliogenesis. Required for proper regulation of SHH signaling. Plays an important role during spermatogenesis by modulating the assembly and elongation of the sperm flagella. The sequence is that of Intraflagellar transport protein 81 homolog (IFT81) from Homo sapiens (Human).